A 127-amino-acid polypeptide reads, in one-letter code: Large ribosomal subunit protein uL22 (127 aa).

This sequence belongs to the universal ribosomal protein uL22 family. As to quaternary structure, part of the 50S ribosomal subunit.

This protein binds specifically to 23S rRNA; its binding is stimulated by other ribosomal proteins, e.g. L4, L17, and L20. It is important during the early stages of 50S assembly. It makes multiple contacts with different domains of the 23S rRNA in the assembled 50S subunit and ribosome. Its function is as follows. The globular domain of the protein is located near the polypeptide exit tunnel on the outside of the subunit, while an extended beta-hairpin is found that lines the wall of the exit tunnel in the center of the 70S ribosome. The sequence is that of Large ribosomal subunit protein uL22 from Methylorubrum populi (strain ATCC BAA-705 / NCIMB 13946 / BJ001) (Methylobacterium populi).